We begin with the raw amino-acid sequence, 348 residues long: GTP 3',8-cyclase (348 aa).

Residues 24 to 242 form the Radical SAM core domain; sequence PFGRAVTYLR…EKQFTLTDID (219 aa). R33 contributes to the GTP binding site. C40 and C44 together coordinate [4Fe-4S] cluster. An S-adenosyl-L-methionine-binding site is contributed by Y46. C47 contributes to the [4Fe-4S] cluster binding site. Position 82 (R82) interacts with GTP. G86 provides a ligand contact to S-adenosyl-L-methionine. Position 115 (T115) interacts with GTP. S139 lines the S-adenosyl-L-methionine pocket. Residue K175 participates in GTP binding. M209 contributes to the S-adenosyl-L-methionine binding site. C272 and C275 together coordinate [4Fe-4S] cluster. 277–279 provides a ligand contact to GTP; that stretch reads RVR. C289 contacts [4Fe-4S] cluster.

This sequence belongs to the radical SAM superfamily. MoaA family. As to quaternary structure, monomer and homodimer. [4Fe-4S] cluster serves as cofactor.

The enzyme catalyses GTP + AH2 + S-adenosyl-L-methionine = (8S)-3',8-cyclo-7,8-dihydroguanosine 5'-triphosphate + 5'-deoxyadenosine + L-methionine + A + H(+). The protein operates within cofactor biosynthesis; molybdopterin biosynthesis. Functionally, catalyzes the cyclization of GTP to (8S)-3',8-cyclo-7,8-dihydroguanosine 5'-triphosphate. The sequence is that of GTP 3',8-cyclase from Rhizobium leguminosarum bv. trifolii (strain WSM2304).